A 290-amino-acid polypeptide reads, in one-letter code: Phosphoribulokinase 1 (290 aa).

ATP is bound at residue 12 to 20; the sequence is GSSGAGTST.

This sequence belongs to the phosphoribulokinase family. Homooctamer.

The enzyme catalyses D-ribulose 5-phosphate + ATP = D-ribulose 1,5-bisphosphate + ADP + H(+). It functions in the pathway carbohydrate biosynthesis; Calvin cycle. Activated by NADH and inhibited by phosphoenolpyruvate. This Cereibacter sphaeroides (Rhodobacter sphaeroides) protein is Phosphoribulokinase 1 (prkA).